Reading from the N-terminus, the 363-residue chain is UDP-3-O-acylglucosamine N-acyltransferase (363 aa).

The active-site Proton acceptor is the histidine 259.

Belongs to the transferase hexapeptide repeat family. LpxD subfamily. Homotrimer.

The catalysed reaction is a UDP-3-O-[(3R)-3-hydroxyacyl]-alpha-D-glucosamine + a (3R)-hydroxyacyl-[ACP] = a UDP-2-N,3-O-bis[(3R)-3-hydroxyacyl]-alpha-D-glucosamine + holo-[ACP] + H(+). It functions in the pathway bacterial outer membrane biogenesis; LPS lipid A biosynthesis. Functionally, catalyzes the N-acylation of UDP-3-O-acylglucosamine using 3-hydroxyacyl-ACP as the acyl donor. Is involved in the biosynthesis of lipid A, a phosphorylated glycolipid that anchors the lipopolysaccharide to the outer membrane of the cell. This chain is UDP-3-O-acylglucosamine N-acyltransferase, found in Ruegeria pomeroyi (strain ATCC 700808 / DSM 15171 / DSS-3) (Silicibacter pomeroyi).